The chain runs to 48 residues: Delta-actitoxin-Bcg1c (48 aa).

3 disulfide bridges follow: Cys-4–Cys-45, Cys-6–Cys-35, and Cys-28–Cys-46.

The protein localises to the secreted. Its subcellular location is the nematocyst. In terms of biological role, binds specifically to voltage-gated sodium channels SCN1A/Nav1.1, thereby delaying their inactivation during signal transduction. In Bunodosoma cangicum (Sea anemone), this protein is Delta-actitoxin-Bcg1c.